Consider the following 239-residue polypeptide: Ribose-5-phosphate isomerase A (239 aa).

Residues 39-42 (SGST), 95-98 (DGAD), and 108-111 (KGGG) contribute to the substrate site. The active-site Proton acceptor is the Glu117. Lys135 is a binding site for substrate.

It belongs to the ribose 5-phosphate isomerase family. In terms of assembly, homodimer.

The enzyme catalyses aldehydo-D-ribose 5-phosphate = D-ribulose 5-phosphate. The protein operates within carbohydrate degradation; pentose phosphate pathway; D-ribose 5-phosphate from D-ribulose 5-phosphate (non-oxidative stage): step 1/1. Catalyzes the reversible conversion of ribose-5-phosphate to ribulose 5-phosphate. This chain is Ribose-5-phosphate isomerase A, found in Chlamydia muridarum (strain MoPn / Nigg).